The chain runs to 156 residues: Ribonuclease pancreatic (156 aa).

An N-terminal signal peptide occupies residues 1 to 28 (MALEKSLVLLPLLVLILLVLGWVQPSLG). Residues 33–43 (AKKFQRQHVDS) show a composition bias toward basic and acidic residues. Residues 33–53 (AKKFQRQHVDSDSSPSSSSTY) form a disordered region. Residues K35 and R38 each contribute to the substrate site. H40 acts as the Proton acceptor in catalysis. Intrachain disulfides connect C54–C112, C68–C123, C86–C138, and C93–C100. The N-linked (GlcNAc...) asparagine glycan is linked to N62. Substrate contacts are provided by residues 69-73 (KPVNT) and K94. An N-linked (GlcNAc...) asparagine glycan is attached at N104. R113 provides a ligand contact to substrate. The N-linked (GlcNAc...) asparagine glycan is linked to N116. The active-site Proton donor is the H147.

Belongs to the pancreatic ribonuclease family. As to quaternary structure, monomer. Interacts with and forms tight 1:1 complexes with RNH1. Dimerization of two such complexes may occur. Interaction with RNH1 inhibits this protein. In terms of tissue distribution, pancreas and other tissues and body fluids (indicating it may have other physiological functions besides its role in digestion).

It localises to the secreted. The catalysed reaction is an [RNA] containing cytidine + H2O = an [RNA]-3'-cytidine-3'-phosphate + a 5'-hydroxy-ribonucleotide-3'-[RNA].. The enzyme catalyses an [RNA] containing uridine + H2O = an [RNA]-3'-uridine-3'-phosphate + a 5'-hydroxy-ribonucleotide-3'-[RNA].. Functionally, endonuclease that catalyzes the cleavage of RNA on the 3' side of pyrimidine nucleotides. Acts on single-stranded and double-stranded RNA. This Pan troglodytes (Chimpanzee) protein is Ribonuclease pancreatic (RNASE1).